Here is a 195-residue protein sequence, read N- to C-terminus: Imidazoleglycerol-phosphate dehydratase (195 aa).

The protein belongs to the imidazoleglycerol-phosphate dehydratase family.

The protein resides in the cytoplasm. The catalysed reaction is D-erythro-1-(imidazol-4-yl)glycerol 3-phosphate = 3-(imidazol-4-yl)-2-oxopropyl phosphate + H2O. The protein operates within amino-acid biosynthesis; L-histidine biosynthesis; L-histidine from 5-phospho-alpha-D-ribose 1-diphosphate: step 6/9. In Maridesulfovibrio salexigens (strain ATCC 14822 / DSM 2638 / NCIMB 8403 / VKM B-1763) (Desulfovibrio salexigens), this protein is Imidazoleglycerol-phosphate dehydratase.